A 72-amino-acid polypeptide reads, in one-letter code: Translation initiation factor IF-1 1 (72 aa).

Residues 1–72 (MAKDDVIQMQ…SRARIVFRAK (72 aa)) enclose the S1-like domain.

Belongs to the IF-1 family. As to quaternary structure, component of the 30S ribosomal translation pre-initiation complex which assembles on the 30S ribosome in the order IF-2 and IF-3, IF-1 and N-formylmethionyl-tRNA(fMet); mRNA recruitment can occur at any time during PIC assembly.

It localises to the cytoplasm. One of the essential components for the initiation of protein synthesis. Stabilizes the binding of IF-2 and IF-3 on the 30S subunit to which N-formylmethionyl-tRNA(fMet) subsequently binds. Helps modulate mRNA selection, yielding the 30S pre-initiation complex (PIC). Upon addition of the 50S ribosomal subunit IF-1, IF-2 and IF-3 are released leaving the mature 70S translation initiation complex. The protein is Translation initiation factor IF-1 1 of Ralstonia nicotianae (strain ATCC BAA-1114 / GMI1000) (Ralstonia solanacearum).